Reading from the N-terminus, the 317-residue chain is ADP-L-glycero-D-manno-heptose-6-epimerase (317 aa).

Residues F10–I11, D31–D32, K38, K53, Q75–S79, and N92 contribute to the NADP(+) site. The active-site Proton acceptor is Y139. K143 provides a ligand contact to NADP(+). N166 contacts substrate. 2 residues coordinate NADP(+): V167 and K175. K175 acts as the Proton acceptor in catalysis. Residues G177, H184, F198–H201, R211, and Y275 each bind substrate.

Belongs to the NAD(P)-dependent epimerase/dehydratase family. HldD subfamily. In terms of assembly, homopentamer. NADP(+) is required as a cofactor.

It catalyses the reaction ADP-D-glycero-beta-D-manno-heptose = ADP-L-glycero-beta-D-manno-heptose. The protein operates within nucleotide-sugar biosynthesis; ADP-L-glycero-beta-D-manno-heptose biosynthesis; ADP-L-glycero-beta-D-manno-heptose from D-glycero-beta-D-manno-heptose 7-phosphate: step 4/4. In terms of biological role, catalyzes the interconversion between ADP-D-glycero-beta-D-manno-heptose and ADP-L-glycero-beta-D-manno-heptose via an epimerization at carbon 6 of the heptose. The sequence is that of ADP-L-glycero-D-manno-heptose-6-epimerase from Shewanella loihica (strain ATCC BAA-1088 / PV-4).